The following is a 349-amino-acid chain: Probable trehalose-phosphate phosphatase H (349 aa).

Belongs to the trehalose phosphatase family. It depends on a divalent metal cation as a cofactor.

The enzyme catalyses alpha,alpha-trehalose 6-phosphate + H2O = alpha,alpha-trehalose + phosphate. Its pathway is glycan biosynthesis; trehalose biosynthesis. In terms of biological role, removes the phosphate from trehalose 6-phosphate to produce free trehalose. Trehalose accumulation in plant may improve abiotic stress tolerance. The protein is Probable trehalose-phosphate phosphatase H (TPPH) of Arabidopsis thaliana (Mouse-ear cress).